A 310-amino-acid polypeptide reads, in one-letter code: Methionyl-tRNA formyltransferase (310 aa).

109 to 112 is a binding site for (6S)-5,6,7,8-tetrahydrofolate; that stretch reads SLLP.

This sequence belongs to the Fmt family.

It catalyses the reaction L-methionyl-tRNA(fMet) + (6R)-10-formyltetrahydrofolate = N-formyl-L-methionyl-tRNA(fMet) + (6S)-5,6,7,8-tetrahydrofolate + H(+). In terms of biological role, attaches a formyl group to the free amino group of methionyl-tRNA(fMet). The formyl group appears to play a dual role in the initiator identity of N-formylmethionyl-tRNA by promoting its recognition by IF2 and preventing the misappropriation of this tRNA by the elongation apparatus. This Staphylococcus epidermidis (strain ATCC 35984 / DSM 28319 / BCRC 17069 / CCUG 31568 / BM 3577 / RP62A) protein is Methionyl-tRNA formyltransferase.